The chain runs to 223 residues: Type III pantothenate kinase (223 aa).

Residue 17-24 (DIGNTRIH) coordinates ATP. Substrate-binding positions include Tyr81 and 85–88 (GIDR). Asp87 serves as the catalytic Proton acceptor. Asp102 serves as a coordination point for K(+). Ser105 is an ATP binding site. Thr157 lines the substrate pocket.

The protein belongs to the type III pantothenate kinase family. As to quaternary structure, homodimer. The cofactor is NH4(+). K(+) is required as a cofactor.

The protein localises to the cytoplasm. The enzyme catalyses (R)-pantothenate + ATP = (R)-4'-phosphopantothenate + ADP + H(+). Its pathway is cofactor biosynthesis; coenzyme A biosynthesis; CoA from (R)-pantothenate: step 1/5. Not regulated by feedback inhibition by CoA and its thioesters as described for many other pantothenate kinases. Not inhibited by N-pentylpantothenamide (N5-Pan), and this compound cannot act as a substrate either. Its function is as follows. Catalyzes the phosphorylation of pantothenate (Pan), the first step in CoA biosynthesis. Can also utilize CTP or GTP instead of ATP as a phosphoryl donor, albeit to a lesser extent. The sequence is that of Type III pantothenate kinase (coaX) from Helicobacter pylori (strain ATCC 700392 / 26695) (Campylobacter pylori).